The primary structure comprises 152 residues: uncharacterized protein (152 aa).

Residues 1–23 (MYSILIACLVLLLCLVIYVGHRA) form the signal peptide.

Belongs to the asfivirus EP152R family.

It localises to the virion. This is an uncharacterized protein from Ornithodoros (relapsing fever ticks).